Here is a 555-residue protein sequence, read N- to C-terminus: Dynein regulatory complex protein 11 (555 aa).

IQ domains lie at 154-183 and 199-226; these read EDEAILMIQKNERGRQARERARLAAITKRQ and HEEAARKIQAAIRGFLWRRRIKKEADKE. Disordered regions lie at residues 232 to 255, 299 to 377, 450 to 469, and 501 to 555; these read MKPKPRDPKRDPQMGEAKNLMRRK, KRNP…EQKI, AAKLGKKGKKKKGKKKEPFS, and AKKD…SCGA. 2 stretches are compositionally biased toward basic and acidic residues: residues 235–244 and 338–367; these read KPRDPKRDPQ and GDGKGKGKDGKGDAKKDAKKDPKKDKKGGG. Residues 452-464 show a composition bias toward basic residues; that stretch reads KLGKKGKKKKGKK. Over residues 501 to 521 the composition is skewed to basic and acidic residues; that stretch reads AKKDEKDAAGDGKGKGKDGKG. A compositionally biased stretch (basic residues) spans 537 to 546; that stretch reads KKKKGGKKKS.

It belongs to the AAA ATPase family. DRC11 subfamily. Component of the nexin-dynein regulatory complex (N-DRC). Interacts with DRC5.

Its subcellular location is the cytoplasm. The protein localises to the cytoskeleton. It is found in the flagellum axoneme. Its function is as follows. Component of the nexin-dynein regulatory complex (N-DRC), a key regulator of ciliary/flagellar motility which maintains the alignment and integrity of the distal axoneme and regulates microtubule sliding in motile axonemes. In Chlamydomonas reinhardtii (Chlamydomonas smithii), this protein is Dynein regulatory complex protein 11.